Here is a 352-residue protein sequence, read N- to C-terminus: Putative [LysW]-L-2-aminoadipate/[LysW]-L-glutamate phosphate reductase (352 aa).

Residues 10–13 and 34–36 contribute to the NADP(+) site; these read SGFT and SRR. Cysteine 151 is a catalytic residue. Position 319 (asparagine 319) interacts with NADP(+).

It belongs to the NAGSA dehydrogenase family. Type 1 subfamily. LysY sub-subfamily.

The protein localises to the cytoplasm. The catalysed reaction is [amino-group carrier protein]-C-terminal-N-(1-carboxy-5-oxopentan-1-yl)-L-glutamine + phosphate + NADP(+) = [amino-group carrier protein]-C-terminal-N-(1-carboxy-5-phosphooxy-5-oxopentan-1-yl)-L-glutamine + NADPH + H(+). The enzyme catalyses [amino-group carrier protein]-C-terminal-gamma-(L-glutamyl-5-semialdehyde)-L-glutamate + phosphate + NADP(+) = [amino-group carrier protein]-C-terminal-gamma-(5-phospho-L-glutamyl)-L-glutamate + NADPH + H(+). The protein operates within amino-acid biosynthesis; L-lysine biosynthesis via AAA pathway; L-lysine from L-alpha-aminoadipate (Thermus route): step 3/5. Its pathway is amino-acid biosynthesis; L-arginine biosynthesis. Involved in both the arginine and lysine biosynthetic pathways. The chain is Putative [LysW]-L-2-aminoadipate/[LysW]-L-glutamate phosphate reductase from Pyrobaculum islandicum (strain DSM 4184 / JCM 9189 / GEO3).